A 180-amino-acid chain; its full sequence is Large ribosomal subunit protein uL5 (180 aa).

It belongs to the universal ribosomal protein uL5 family. In terms of assembly, part of the 50S ribosomal subunit; part of the 5S rRNA/L5/L18/L25 subcomplex. Contacts the 5S rRNA and the P site tRNA. Forms a bridge to the 30S subunit in the 70S ribosome.

In terms of biological role, this is one of the proteins that bind and probably mediate the attachment of the 5S RNA into the large ribosomal subunit, where it forms part of the central protuberance. In the 70S ribosome it contacts protein S13 of the 30S subunit (bridge B1b), connecting the 2 subunits; this bridge is implicated in subunit movement. Contacts the P site tRNA; the 5S rRNA and some of its associated proteins might help stabilize positioning of ribosome-bound tRNAs. The sequence is that of Large ribosomal subunit protein uL5 from Moorella thermoacetica (strain ATCC 39073 / JCM 9320).